Here is a 167-residue protein sequence, read N- to C-terminus: 3-dehydroquinate dehydratase (167 aa).

Tyr-22 serves as the catalytic Proton acceptor. Asn-76, His-82, and Asp-89 together coordinate substrate. His-102 acts as the Proton donor in catalysis. Residues 103–104 (LT) and Arg-113 contribute to the substrate site.

This sequence belongs to the type-II 3-dehydroquinase family. In terms of assembly, homododecamer.

The catalysed reaction is 3-dehydroquinate = 3-dehydroshikimate + H2O. The protein operates within metabolic intermediate biosynthesis; chorismate biosynthesis; chorismate from D-erythrose 4-phosphate and phosphoenolpyruvate: step 3/7. Its function is as follows. Catalyzes a trans-dehydration via an enolate intermediate. The chain is 3-dehydroquinate dehydratase from Helicobacter pylori (strain P12).